A 57-amino-acid polypeptide reads, in one-letter code: Potassium channel toxin alpha-KTx 17.2 (57 aa).

Residues 1–26 form the signal peptide; sequence MKTIIVLLLLTIVAAAVVESSPKARR. 3 cysteine pairs are disulfide-bonded: C30/C46, C36/C51, and C40/C53.

This sequence belongs to the short scorpion toxin superfamily. Potassium channel inhibitor family. Alpha-KTx 17 subfamily. In terms of tissue distribution, expressed by the venom gland.

The protein resides in the secreted. Inhibits voltage-gated potassium channels. The chain is Potassium channel toxin alpha-KTx 17.2 from Lychas mucronatus (Chinese swimming scorpion).